Here is a 108-residue protein sequence, read N- to C-terminus: UPF0060 membrane protein YE2027 (108 aa).

The next 4 helical transmembrane spans lie at 6–26 (LLFFVTALAEIIGCFLPYLWL), 29–49 (GASMWLLLPAAASLALFVWLL), 59–79 (VYAAYGGVYVATALIWLRVVD), and 85–105 (LFDWVGAAVALVGMLIIVAGW).

Belongs to the UPF0060 family.

Its subcellular location is the cell inner membrane. In Yersinia enterocolitica serotype O:8 / biotype 1B (strain NCTC 13174 / 8081), this protein is UPF0060 membrane protein YE2027.